A 730-amino-acid chain; its full sequence is Elongation factor 2 (730 aa).

Residues 19 to 229 enclose the tr-type G domain; the sequence is LMIRNIGIVA…GVSFSEVFNY (211 aa). Residues 28–35, 94–98, and 148–151 each bind GTP; these read AHIDHGKT, DTPGH, and NKVD. At histidine 596 the chain carries Diphthamide.

It belongs to the TRAFAC class translation factor GTPase superfamily. Classic translation factor GTPase family. EF-G/EF-2 subfamily.

Its subcellular location is the cytoplasm. Catalyzes the GTP-dependent ribosomal translocation step during translation elongation. During this step, the ribosome changes from the pre-translocational (PRE) to the post-translocational (POST) state as the newly formed A-site-bound peptidyl-tRNA and P-site-bound deacylated tRNA move to the P and E sites, respectively. Catalyzes the coordinated movement of the two tRNA molecules, the mRNA and conformational changes in the ribosome. The polypeptide is Elongation factor 2 (fusA) (Methanococcoides burtonii (strain DSM 6242 / NBRC 107633 / OCM 468 / ACE-M)).